Consider the following 148-residue polypeptide: UPF0179 protein VNG_1401C (148 aa).

It belongs to the UPF0179 family.

The chain is UPF0179 protein VNG_1401C from Halobacterium salinarum (strain ATCC 700922 / JCM 11081 / NRC-1) (Halobacterium halobium).